A 219-amino-acid chain; its full sequence is Transmembrane emp24 domain-containing protein 10 (219 aa).

Positions 1–31 (MSGSSGPLSWPGPRPCALLFLLLLGPSSVLA) are cleaved as a signal peptide. The required for interaction with STX17 stretch occupies residues 1 to 142 (MSGSSGPLSW…KNYEEIAKVE (142 aa)). Residues 32 to 185 (ISFHLPVNSR…RDTNESTNTR (154 aa)) are Lumenal-facing. The GOLD domain maps to 41-193 (RKCLREEIHK…TRVLYFSIFS (153 aa)). Residues 147-178 (LEVELRRLEDLSESIVNDFAYMKKREEEMRDT) are required for TMED10 and TMED2 cis-Golgi network localization. Dimethylated arginine occurs at positions 171 and 176. N-linked (GlcNAc...) asparagine glycosylation occurs at asparagine 179. A helical transmembrane segment spans residues 186 to 206 (VLYFSIFSMLCLIGLATWQVF). The interval 204 to 219 (QVFYLRRFFKAKKLIE) is interaction with COPG1. Residues 207-219 (YLRRFFKAKKLIE) lie on the Cytoplasmic side of the membrane. The interaction with ARF1 and IL1B stretch occupies residues 207 to 219 (YLRRFFKAKKLIE). The short motif at 211 to 212 (FF) is the COPII vesicle coat-binding element. The short motif at 211–219 (FFKAKKLIE) is the COPI vesicle coat-binding element.

It belongs to the EMP24/GP25L family. As to quaternary structure, predominantly dimeric and to a lesser extent monomeric in the ER. Monomer and dimer in ERGIC and cis-Golgi network. Forms homooligomer (via GOLD domain); the assembly is promoted by direct binding with leaderless cargos and may form a protein channel that facilitates cargo entry into the ERGIC. Forms heterooligomeric complexes with other members of the p24 family such as TMED2, TMED7 and TMED9. Interacts (via GOLD domain) with TMED2 (via GOLD domain); the complex is required for export of TMED10 from the ER to the cis-Golgi network; the complex is proposed to be involved in cis-Golgi network dynamics and / or biogenesis. Associates with the COPI vesicle coat subunits (coatomer). Tetramerization of the cytoplasmic domain at the Golgi membrane in vitro; the complex is proposed to interact with COPI coatomer and induce budding of the vesicles. Interacts with COPG1; the interaction involves TMED10 homodimer. Interacts with ARF1 (GDP-bound); the interaction probably involves a TMED10 oligomer. Interacts with SEC23A, SEC24B, SEC24C and SEC24D components of the coat protein complex II/COPII, indicative of an association of TMED10 with the COPII vesicle coat. Interacts with CD59. Interacts with MPPE1/PGAP5; the complex might recruit and sort GPI-anchored proteins to the ER-exit site, or the interaction might lead to recycling of PGAP5 between the ER and the Golgi. Interacts with F2LR1/PAR2. Interacts with KDELR2/ERD2; the interaction is disrupted by KDELR2 ligand. Found in a complex composed at least of SURF4, TMED2 and TMED10. Associates with the presenilin-dependent gamma-secretase complex. Interacts with STX17; the interaction is direct. Interacts with IL-1; the interaction is direct. Interacts with RAB21 (active GTP-bound form); the interaction is indirect and regulates TMED10 abundance and localization at the Golgi.

It localises to the endoplasmic reticulum membrane. The protein localises to the endoplasmic reticulum-Golgi intermediate compartment membrane. Its subcellular location is the golgi apparatus membrane. The protein resides in the golgi apparatus. It is found in the cis-Golgi network membrane. It localises to the trans-Golgi network membrane. The protein localises to the cytoplasmic vesicle. Its subcellular location is the secretory vesicle membrane. The protein resides in the cell membrane. It is found in the melanosome. Cargo receptor involved in protein vesicular trafficking and quality control in the endoplasmic reticulum (ER) and Golgi. The p24 protein family is a group of transmembrane proteins that bind coat protein complex I/COPI and coat protein complex II/COPII involved in vesicular trafficking between the membranes. Acts at the lumenal side for incorporation of secretory cargo molecules into transport vesicles and involved in vesicle coat formation at the cytoplasmic side. Mainly functions in the early secretory pathway and cycles between the ER, ER-Golgi intermediate compartment (ERGIC) and Golgi, mediating cargo transport through COPI and COPII-coated vesicles. In COPII vesicle-mediated anterograde transport, involved in the transport of GPI-anchored proteins by acting together with TMED2 as their cargo receptor; the function specifically implies SEC24C and SEC24D of the COPII vesicle coat and lipid raft-like microdomains of the ER. Recognizes GPI anchors structural remodeled in the ER by the GPI inositol-deacylase/PGAP1 and the metallophosphoesterase MPPE1/PGAP5. In COPI vesicle-mediated retrograde transport, involved in the biogenesis of COPI vesicles and vesicle coat recruitment. Involved in trafficking of amyloid beta A4 protein and soluble APP-beta release (independent from the modulation of gamma-secretase activity). Involved in the KDELR2-mediated retrograde transport of the toxin A subunit (CTX-A-K63)together with COPI and the COOH terminus of KDELR2. On Golgi membranes, acts as a primary receptor for ARF1-GDP, a GTP-binding protein involved in COPI-vesicle formation. Increases coatomer-dependent GTPase-activating activity of ARFGAP2 which mediates the hydrolysis of ARF1-bound GTP and therefore modulates protein trafficking from the Golgi apparatus. Involved in the exocytic trafficking of G protein-coupled receptors F2LR1/PAR2 (trypsin and tryspin-like enzyme receptor), OPRM1 (opioid receptor) and P2RY4 (UTD and UDP receptor) from the Golgi to the plasma membrane, thus contributing to receptor resensitization. In addition to its cargo receptor activity, may also act as a protein channel after oligomerization, facilitating the post-translational entry of leaderless cytoplasmic cargo into the ERGIC. Involved in the translocation into ERGIC, the vesicle entry and the secretion of leaderless cargos (lacking the secretion signal sequence), including the mature form of interleukin 1/IL-1 family members, the alpha-crystallin B chain HSPB5, the carbohydrate-binding proteins galectin-1/LGALS1 and galectin-3/LGALS3, the microtubule-associated protein Tau/MAPT, and the annexin A1/ANXA1; the translocation process is dependent on cargo protein unfolding and enhanced by chaperones HSP90AB1 and HSP90B1/GRP9. Could also associates with the presenilin-dependent gamma-secretase complex in order to regulate gamma-cleavages of the amyloid beta A4 protein to yield amyloid-beta 40/Abeta40. This Mesocricetus auratus (Golden hamster) protein is Transmembrane emp24 domain-containing protein 10 (TMED10).